Consider the following 542-residue polypeptide: Sensory neuron membrane protein 2 (542 aa).

Topologically, residues 1–487 (MMVMNTELRQ…MKVLTLLDIV (487 aa)) are extracellular. Asn33, Asn128, Asn238, and Asn274 each carry an N-linked (GlcNAc...) asparagine glycan. Cystine bridges form between Cys283–Cys351, Cys312–Cys378, and Cys353–Cys367. The helical transmembrane segment at 488–508 (QWVMIGSGLLLAIIMPIVYFI) threads the bilayer. Over 509–542 (KRRPSSGSITPTLTTTTSTVSISDGGGLGGNPQK) the chain is Cytoplasmic.

The protein belongs to the CD36 family. In terms of tissue distribution, detected in the antenna, legs and wings. Higher levels of expression detected in male compared to female.

The protein localises to the cell membrane. Plays an olfactory role that is not restricted to pheromone sensitivity. The polypeptide is Sensory neuron membrane protein 2 (Aedes aegypti (Yellowfever mosquito)).